The sequence spans 188 residues: UPF0157 protein DR_2534 (188 aa).

The segment covering 1–12 (MGRGGRGVGGGR) has biased composition (gly residues). The tract at residues 1–37 (MGRGGRGVGGGRPEGHGASVEGGRTRQTEGMDLISPD) is disordered.

It belongs to the UPF0157 (GrpB) family.

The polypeptide is UPF0157 protein DR_2534 (Deinococcus radiodurans (strain ATCC 13939 / DSM 20539 / JCM 16871 / CCUG 27074 / LMG 4051 / NBRC 15346 / NCIMB 9279 / VKM B-1422 / R1)).